A 691-amino-acid chain; its full sequence is DNA ligase (691 aa).

Residues Asp41–Asp45, Ser90–Leu91, and Glu130 each bind NAD(+). Lys132 (N6-AMP-lysine intermediate) is an active-site residue. NAD(+)-binding residues include Arg153, Glu190, Lys307, and Lys331. The Zn(2+) site is built by Cys425, Cys428, Cys443, and Cys449. A BRCT domain is found at Ala610–Arg691.

It belongs to the NAD-dependent DNA ligase family. LigA subfamily. It depends on Mg(2+) as a cofactor. Mn(2+) is required as a cofactor.

It catalyses the reaction NAD(+) + (deoxyribonucleotide)n-3'-hydroxyl + 5'-phospho-(deoxyribonucleotide)m = (deoxyribonucleotide)n+m + AMP + beta-nicotinamide D-nucleotide.. In terms of biological role, DNA ligase that catalyzes the formation of phosphodiester linkages between 5'-phosphoryl and 3'-hydroxyl groups in double-stranded DNA using NAD as a coenzyme and as the energy source for the reaction. It is essential for DNA replication and repair of damaged DNA. This chain is DNA ligase, found in Burkholderia mallei (strain NCTC 10247).